The primary structure comprises 236 residues: Small ribosomal subunit protein uS2c (236 aa).

This sequence belongs to the universal ribosomal protein uS2 family.

The protein resides in the plastid. It localises to the chloroplast. The chain is Small ribosomal subunit protein uS2c (rps2) from Buxus microphylla (Littleleaf boxwood).